Consider the following 244-residue polypeptide: 15,16-dihydrobiliverdin:ferredoxin oxidoreductase (244 aa).

The protein belongs to the HY2 family.

It catalyses the reaction 15,16-dihydrobiliverdin + oxidized 2[4Fe-4S]-[ferredoxin] = biliverdin IXalpha + reduced 2[4Fe-4S]-[ferredoxin] + 2 H(+). In terms of biological role, catalyzes the two-electron reduction of biliverdin IX-alpha at the C15 methine bridge. The sequence is that of 15,16-dihydrobiliverdin:ferredoxin oxidoreductase (pebA) from Nostoc punctiforme (strain ATCC 29133 / PCC 73102).